The sequence spans 237 residues: UPF0173 metal-dependent hydrolase BOV_A0561 (237 aa).

The protein belongs to the UPF0173 family.

This chain is UPF0173 metal-dependent hydrolase BOV_A0561, found in Brucella ovis (strain ATCC 25840 / 63/290 / NCTC 10512).